Reading from the N-terminus, the 382-residue chain is MSLVEIIEGKARILIPNYKDYMKDGKFDPSWAPVFYNPKMILNRDLSVLAANVVKPKSLIDGLSATGVRGIRYGLEINGVEEIILNDIDSDAVELIKKNVKINDLESRAKIYNNNINSLLHEIKVDYVDIDPFGSPAPFLLSSFSAAKSKQYVAITATDLAALMCSSKTSARRKYGLICNKMSFSRELGLRGLISKAITEAAVVEKAVTPVFSFYNDYYYRVIFKVERGAKKVDRQLSKLVYYYECPKCGYRIESEYLQQMKCTNCNLVMQTYGPAYKESLVDYEFLNNMISELDKFSYFQTFSKLKSILLTIKDESKYSENYYRIDFLASLARVNVPRRDNVINCLVDASRTHLDPLGVKTSKNLDEIKECIKKLSSRNTS.

One can recognise a Trm1 methyltransferase domain in the interval 4-373 (VEIIEGKARI…KNLDEIKECI (370 aa)). S-adenosyl-L-methionine-binding residues include R44, R69, and D87. 4 residues coordinate Zn(2+): C246, C249, C263, and C266.

It belongs to the class I-like SAM-binding methyltransferase superfamily. Trm1 family.

The catalysed reaction is guanosine(26) in tRNA + 2 S-adenosyl-L-methionine = N(2)-dimethylguanosine(26) in tRNA + 2 S-adenosyl-L-homocysteine + 2 H(+). In terms of biological role, dimethylates a single guanine residue at position 26 of a number of tRNAs using S-adenosyl-L-methionine as donor of the methyl groups. This Sulfolobus acidocaldarius (strain ATCC 33909 / DSM 639 / JCM 8929 / NBRC 15157 / NCIMB 11770) protein is tRNA (guanine(26)-N(2))-dimethyltransferase.